The sequence spans 477 residues: C4-dicarboxylate transport protein 1 (477 aa).

8 helical membrane passes run 21–39 (PYVQVLVAILLGVAVGHFY), 59–76 (MIIAPVIFLTVSTGIAGM), 89–111 (AMVYFVTFSTLALIVGLIVGNVI), 162–179 (ILQVLFFSVLFGIALAMV), 200–221 (LVGILMKAAPIGAFGAMAFTIG), 231–253 (LAMLVGTFYLTAFLFVFGVLGAV), 342–364 (VLLLLVAMLSSKGAAGVTGAGFV), and 368–387 (ATLSVVPAVPVAGMALILGV). A disordered region spans residues 435 to 477 (SAGQPLITPAPSNSAASLPVESPGWSQTPDDRAAGSKQTLAGR).

This sequence belongs to the dicarboxylate/amino acid:cation symporter (DAACS) (TC 2.A.23) family.

It localises to the cell inner membrane. Its function is as follows. Responsible for the transport of dicarboxylates such as succinate, fumarate, and malate from the periplasm across the membrane. This transport system plays an important role in the energy supply of rhizobium-legume symbionts. This is C4-dicarboxylate transport protein 1 (dctA1) from Mesorhizobium japonicum (strain LMG 29417 / CECT 9101 / MAFF 303099) (Mesorhizobium loti (strain MAFF 303099)).